Reading from the N-terminus, the 413-residue chain is Tryptophan synthase beta chain 2 (413 aa).

Lys-107 bears the N6-(pyridoxal phosphate)lysine mark.

The protein belongs to the TrpB family. Tetramer of two alpha and two beta chains. Requires pyridoxal 5'-phosphate as cofactor.

The catalysed reaction is (1S,2R)-1-C-(indol-3-yl)glycerol 3-phosphate + L-serine = D-glyceraldehyde 3-phosphate + L-tryptophan + H2O. It functions in the pathway amino-acid biosynthesis; L-tryptophan biosynthesis; L-tryptophan from chorismate: step 5/5. Functionally, the beta subunit is responsible for the synthesis of L-tryptophan from indole and L-serine. The sequence is that of Tryptophan synthase beta chain 2 (trpB2) from Nostoc sp. (strain PCC 7120 / SAG 25.82 / UTEX 2576).